The primary structure comprises 330 residues: Tryptophan--tRNA ligase (330 aa).

Residues 10 to 12 and 18 to 19 contribute to the ATP site; these read QPS and GN. Residues 11–19 carry the 'HIGH' region motif; sequence PSGTLTLGN. L-tryptophan is bound at residue Asp133. ATP-binding positions include 145–147, Ile184, and 193–197; these read GED and KMSKS. Positions 193–197 match the 'KMSKS' region motif; the sequence is KMSKS.

It belongs to the class-I aminoacyl-tRNA synthetase family. Homodimer.

The protein resides in the cytoplasm. It catalyses the reaction tRNA(Trp) + L-tryptophan + ATP = L-tryptophyl-tRNA(Trp) + AMP + diphosphate + H(+). In terms of biological role, catalyzes the attachment of tryptophan to tRNA(Trp). The sequence is that of Tryptophan--tRNA ligase from Halalkalibacterium halodurans (strain ATCC BAA-125 / DSM 18197 / FERM 7344 / JCM 9153 / C-125) (Bacillus halodurans).